The following is a 370-amino-acid chain: Lipoyl synthase, mitochondrial (370 aa).

7 residues coordinate [4Fe-4S] cluster: C100, C105, C111, C131, C135, C138, and S346. Residues 116 to 335 (DKSRATATIM…KEVAEKLGFL (220 aa)) enclose the Radical SAM core domain.

It belongs to the radical SAM superfamily. Lipoyl synthase family. [4Fe-4S] cluster is required as a cofactor.

The protein localises to the mitochondrion. The enzyme catalyses [[Fe-S] cluster scaffold protein carrying a second [4Fe-4S](2+) cluster] + N(6)-octanoyl-L-lysyl-[protein] + 2 oxidized [2Fe-2S]-[ferredoxin] + 2 S-adenosyl-L-methionine + 4 H(+) = [[Fe-S] cluster scaffold protein] + N(6)-[(R)-dihydrolipoyl]-L-lysyl-[protein] + 4 Fe(3+) + 2 hydrogen sulfide + 2 5'-deoxyadenosine + 2 L-methionine + 2 reduced [2Fe-2S]-[ferredoxin]. The protein operates within protein modification; protein lipoylation via endogenous pathway; protein N(6)-(lipoyl)lysine from octanoyl-[acyl-carrier-protein]: step 2/2. Its function is as follows. Catalyzes the radical-mediated insertion of two sulfur atoms into the C-6 and C-8 positions of the octanoyl moiety bound to the lipoyl domains of lipoate-dependent enzymes, thereby converting the octanoylated domains into lipoylated derivatives. The protein is Lipoyl synthase, mitochondrial (lip5) of Schizosaccharomyces pombe (strain 972 / ATCC 24843) (Fission yeast).